The chain runs to 1942 residues: Probable helicase with zinc finger domain (1942 aa).

Residues 178 to 206 (SEEYTLCKRFLEQGICRYGAQCTSAHSQE) form a C3H1-type zinc finger. Ser248 carries the post-translational modification Phosphoserine. An ATP-binding site is contributed by 668–675 (GPYGTGKT). Residues 794 to 797 (DEAA) carry the DEAA box motif. Residues 1117–1127 (SGSTNKQQQSP) show a composition bias toward polar residues. Residues 1117–1141 (SGSTNKQQQSPPKGKSLHHTQNDHF) are disordered. Phosphothreonine is present on Thr1163. The residue at position 1245 (Arg1245) is an Omega-N-methylarginine. 4 disordered regions span residues 1246–1345 (GSPI…INLP), 1386–1429 (NLPE…GPNN), 1527–1552 (QGSA…GLHQ), and 1608–1637 (RQVQ…FNDN). Basic and acidic residues-rich tracts occupy residues 1268–1281 (HQEK…RNGK) and 1292–1308 (NKIR…KQVD). A compositionally biased stretch (low complexity) spans 1399 to 1412 (NQVVQQQSQLNQQP). At Ser1614 the chain carries Phosphoserine. The segment covering 1623–1636 (SSTDHSSHFSNFND) has biased composition (low complexity). 4 positions are modified to phosphoserine: Ser1645, Ser1738, Ser1741, and Ser1766. Disordered regions lie at residues 1729 to 1779 (FHPL…TPQD), 1792 to 1843 (NQSS…PEDQ), and 1870 to 1942 (MPNK…SYFK). A compositionally biased stretch (low complexity) spans 1731 to 1745 (PLSSRTVSSSSLPSL). 2 stretches are compositionally biased toward polar residues: residues 1761–1779 (RISS…TPQD) and 1792–1825 (NQSS…SRTA). Low complexity-rich tracts occupy residues 1876–1888 (AESA…QSSA) and 1920–1942 (LSLF…SYFK).

Belongs to the DNA2/NAM7 helicase family. Interacts with SMYD2. Interacts with POLR2A. Interacts with SMYD3; the interaction may bridge SMYD3 and RNA polymerase II. Expressed predominantly in thymus and brain. Expression is down-regulated in 28 of 95 tested cancer cell lines.

Its subcellular location is the nucleus. Its function is as follows. May act as a helicase that plays a role in RNA metabolism in multiple tissues and organs within the developing embryo. This chain is Probable helicase with zinc finger domain (HELZ), found in Homo sapiens (Human).